Here is a 520-residue protein sequence, read N- to C-terminus: Polyprenol-phosphate-mannose--protein mannosyltransferase (520 aa).

Helical transmembrane passes span 38–58, 119–139, 145–165, 168–188, 237–257, 274–294, 388–408, 418–438, 441–461, and 485–505; these read WAII…SATA, LGWR…IMAI, GSTM…VLLV, RFGM…WALI, WSGL…DLWL, DVIP…IWSW, IYLF…LWAL, GYVV…AAYD, MYFF…ALAC, and YISL…GFVI.

It belongs to the glycosyltransferase 39 family.

It localises to the cell membrane. It participates in protein modification; protein glycosylation. In terms of biological role, protein O-mannosyltransferase that catalyzes the transfer of a single mannose residue from a polyprenol phospho-mannosyl lipidic donor to the hydroxyl group of selected serine and threonine residues in acceptor proteins. This Corynebacterium glutamicum (strain ATCC 13032 / DSM 20300 / JCM 1318 / BCRC 11384 / CCUG 27702 / LMG 3730 / NBRC 12168 / NCIMB 10025 / NRRL B-2784 / 534) protein is Polyprenol-phosphate-mannose--protein mannosyltransferase (pmt).